The sequence spans 206 residues: Large ribosomal subunit protein bL25 (206 aa).

The segment at 168-206 (DPEESVVTVEVPEDASESTAAPEAAAPAADAAAPAADAK) is disordered. The span at 184-206 (ESTAAPEAAAPAADAAAPAADAK) shows a compositional bias: low complexity.

This sequence belongs to the bacterial ribosomal protein bL25 family. CTC subfamily. As to quaternary structure, part of the 50S ribosomal subunit; part of the 5S rRNA/L5/L18/L25 subcomplex. Contacts the 5S rRNA. Binds to the 5S rRNA independently of L5 and L18.

This is one of the proteins that binds to the 5S RNA in the ribosome where it forms part of the central protuberance. This chain is Large ribosomal subunit protein bL25, found in Bifidobacterium longum (strain DJO10A).